Consider the following 545-residue polypeptide: Esterase-5C (545 aa).

Positions 1 to 19 (MLAARLIILLSFYWLSASA) are cleaved as a signal peptide. Cysteine 84 and cysteine 103 form a disulfide bridge. A glycan (N-linked (GlcNAc...) asparagine) is linked at asparagine 113. Serine 207 (acyl-ester intermediate) is an active-site residue. A disulfide bridge links cysteine 259 with cysteine 271. N-linked (GlcNAc...) asparagine glycosylation is present at asparagine 421. Histidine 467 functions as the Charge relay system in the catalytic mechanism. Asparagine 507 carries N-linked (GlcNAc...) asparagine glycosylation. A disulfide bridge connects residues cysteine 515 and cysteine 536.

The protein belongs to the type-B carboxylesterase/lipase family.

The protein localises to the secreted. It catalyses the reaction a carboxylic ester + H2O = an alcohol + a carboxylate + H(+). The sequence is that of Esterase-5C (Est-5C) from Drosophila pseudoobscura pseudoobscura (Fruit fly).